We begin with the raw amino-acid sequence, 176 residues long: Peptide methionine sulfoxide reductase MsrA (176 aa).

Residue Cys-12 is part of the active site.

This sequence belongs to the MsrA Met sulfoxide reductase family.

It carries out the reaction L-methionyl-[protein] + [thioredoxin]-disulfide + H2O = L-methionyl-(S)-S-oxide-[protein] + [thioredoxin]-dithiol. It catalyses the reaction [thioredoxin]-disulfide + L-methionine + H2O = L-methionine (S)-S-oxide + [thioredoxin]-dithiol. Has an important function as a repair enzyme for proteins that have been inactivated by oxidation. Catalyzes the reversible oxidation-reduction of methionine sulfoxide in proteins to methionine. The sequence is that of Peptide methionine sulfoxide reductase MsrA from Thermus thermophilus (strain ATCC BAA-163 / DSM 7039 / HB27).